The primary structure comprises 436 residues: Nicotinate phosphoribosyltransferase (436 aa).

Residue His-231 is modified to Phosphohistidine; by autocatalysis.

Belongs to the NAPRTase family. Transiently phosphorylated on a His residue during the reaction cycle. Phosphorylation strongly increases the affinity for substrates and increases the rate of nicotinate D-ribonucleotide production. Dephosphorylation regenerates the low-affinity form of the enzyme, leading to product release.

It catalyses the reaction nicotinate + 5-phospho-alpha-D-ribose 1-diphosphate + ATP + H2O = nicotinate beta-D-ribonucleotide + ADP + phosphate + diphosphate. Its pathway is cofactor biosynthesis; NAD(+) biosynthesis; nicotinate D-ribonucleotide from nicotinate: step 1/1. Functionally, catalyzes the synthesis of beta-nicotinate D-ribonucleotide from nicotinate and 5-phospho-D-ribose 1-phosphate at the expense of ATP. The protein is Nicotinate phosphoribosyltransferase of Vibrio campbellii (strain ATCC BAA-1116).